Here is a 564-residue protein sequence, read N- to C-terminus: Homeobox protein unc-62 (564 aa).

Disordered stretches follow at residues 40-59 (NEQFNDGYGPPPGSASADPA), 216-270 (ERAS…VMGG), 293-313 (SSSSNQAGDHPLANGGTLHST), 328-397 (PSTC…KVPK), and 455-503 (IDQN…PSSL). The MEIS N-terminal domain maps to 133 to 218 (SSDVCSSASF…PLDIVGDERA (86 aa)). A compositionally biased stretch (low complexity) spans 219–230 (SSSQPPMSPGSM). 2 stretches are compositionally biased toward polar residues: residues 328-344 (PSTCSSGGLRQDSTPLS) and 381-390 (LSDSANGSQN). Residues 392–454 (KRKVPKVFSK…NARRRIVQPM (63 aa)) constitute a DNA-binding region (homeobox; TALE-type). 2 stretches are compositionally biased toward polar residues: residues 455 to 469 (IDQNNRAGRSGQMNV) and 494 to 503 (ANYSPDPSSL).

Belongs to the TALE/MEIS homeobox family. In terms of assembly, forms a heterodimer with homeobox ceh-60.

Its subcellular location is the nucleus. Its function is as follows. Acts redundantly with ceh-20 and ceh-40 to perform overlapping roles during embryogenesis. Required for postembryonic development of the ectoderm, including the Q, V and P cell lineages, playing a crucial role in ensuring that these cells and their descendants undergo their invariant patterns of cell division, migration, fusion and morphogenesis. Has a role in the mig-13 pathway to promote anterior migration of neuroblasts in the Q lineage. Required for multiple roles in regulating vulva development. Associates with homeobox ceh-60 to regulate gene expression, including repression of genes involved in innate immunity and activation of genes involved in vitellogenesis. Involved in lipid homeostasis, contributing to the formation of the cuticle. This chain is Homeobox protein unc-62 (unc-62), found in Caenorhabditis elegans.